A 689-amino-acid polypeptide reads, in one-letter code: Elongation factor G 1 (689 aa).

Residues Asp-7–Leu-282 enclose the tr-type G domain. GTP contacts are provided by residues Ser-16–Thr-23, Asp-80–His-84, and Asn-134–Asp-137.

The protein belongs to the TRAFAC class translation factor GTPase superfamily. Classic translation factor GTPase family. EF-G/EF-2 subfamily.

Its subcellular location is the cytoplasm. In terms of biological role, catalyzes the GTP-dependent ribosomal translocation step during translation elongation. During this step, the ribosome changes from the pre-translocational (PRE) to the post-translocational (POST) state as the newly formed A-site-bound peptidyl-tRNA and P-site-bound deacylated tRNA move to the P and E sites, respectively. Catalyzes the coordinated movement of the two tRNA molecules, the mRNA and conformational changes in the ribosome. In Geobacter sulfurreducens (strain ATCC 51573 / DSM 12127 / PCA), this protein is Elongation factor G 1.